The primary structure comprises 698 residues: Transferrin-binding protein B (698 aa).

Positions 1–20 (MNNPLVNQAAMVLPVFLLSA) are cleaved as a signal peptide. A lipid anchor (N-palmitoyl cysteine) is attached at cysteine 21. The S-diacylglycerol cysteine moiety is linked to residue cysteine 21. Disordered regions lie at residues 33–58 (VDTEAPRPAPKYQDVSSEKPQAQKDQ), 83–102 (IKLSENDWEQTDNGDIKNPS), 294–324 (FSGKAEATDKPKNDGETKEHPFVSDSSSLSG), 349–383 (GSAKTQDKPRNGAVASGGAGAAASNGAAGTSSENS), 428–479 (ESGK…GDAN), and 669–698 (TKNATDASGNGNSASSATVVFGAKRQKPVQ). Positions 46–56 (DVSSEKPQAQK) are enriched in polar residues. The span at 299–315 (EATDKPKNDGETKEHPF) shows a compositional bias: basic and acidic residues. Positions 369–383 (AAASNGAAGTSSENS) are enriched in low complexity. Residues 460 to 476 (QAGTAENGNPAASNTAG) show a composition bias toward polar residues. The segment covering 671–686 (NATDASGNGNSASSAT) has biased composition (low complexity).

The protein belongs to the TbpB family. As to quaternary structure, binds only human holo-transferrin (TF), via the TF C-terminus. Forms a large complex with TbpA and TF. Interacts via its C-terminal domain with Slam1.

Its subcellular location is the cell outer membrane. It localises to the cell surface. In terms of biological role, neisseria acquires iron by extracting it from serum transferrin (TF) in its human host. Acts as a TF receptor and is required for TF utilization. Involved in the initial capture of TF. Helps select only those TF molecules that can be used as an iron source and concentrates them on the cell surface, maintaining the iron-loaded status of the TF C-terminal lobe until its delivery to TbpA. The sequence is that of Transferrin-binding protein B from Neisseria meningitidis serogroup A / serotype 4A (strain DSM 15465 / Z2491).